Consider the following 482-residue polypeptide: GTPase Obg (482 aa).

The Obg domain occupies 2–159; sequence PRFVDRVVIH…VDLTLELKTV (158 aa). Residues 160-340 form the OBG-type G domain; that stretch reads ADVGLVGFPS…LTFALWEMIV (181 aa). GTP-binding positions include 166–173, 191–195, 212–215, 292–295, and 321–323; these read GFPSAGKS, FTTLV, DVPG, NKVD, and STL. Mg(2+) contacts are provided by S173 and T193. In terms of domain architecture, OCT spans 358-438; the sequence is PIPVDESGFT…IGDMTFDWEP (81 aa). The interval 441–482 is disordered; that stretch reads PAGVDVTMSGRGTDARIDKTDRVGAAERRQARRVRRGQVEPE. The segment covering 453 to 469 has biased composition (basic and acidic residues); that stretch reads TDARIDKTDRVGAAERR.

Belongs to the TRAFAC class OBG-HflX-like GTPase superfamily. OBG GTPase family. Monomer. It depends on Mg(2+) as a cofactor.

The protein resides in the cytoplasm. In terms of biological role, an essential GTPase which binds GTP, GDP and possibly (p)ppGpp with moderate affinity, with high nucleotide exchange rates and a fairly low GTP hydrolysis rate. Plays a role in control of the cell cycle, stress response, ribosome biogenesis and in those bacteria that undergo differentiation, in morphogenesis control. This is GTPase Obg from Mycobacteroides abscessus (strain ATCC 19977 / DSM 44196 / CCUG 20993 / CIP 104536 / JCM 13569 / NCTC 13031 / TMC 1543 / L948) (Mycobacterium abscessus).